The sequence spans 601 residues: Transcription factor ATEG_07666 (601 aa).

A DNA-binding region (zn(2)-C6 fungal-type) is located at residues 17-44 (CEECRRRKARCDRVRPKCGFCTENGMQC).

It is found in the nucleus. Specific transcriptional regulator for the azasperpyranone A biosynthesis cluster B. This Aspergillus terreus (strain NIH 2624 / FGSC A1156) protein is Transcription factor ATEG_07666.